An 888-amino-acid chain; its full sequence is Alanine--tRNA ligase (888 aa).

The Zn(2+) site is built by His-573, His-577, Cys-676, and His-680.

It belongs to the class-II aminoacyl-tRNA synthetase family. Zn(2+) is required as a cofactor.

Its subcellular location is the cytoplasm. The catalysed reaction is tRNA(Ala) + L-alanine + ATP = L-alanyl-tRNA(Ala) + AMP + diphosphate. In terms of biological role, catalyzes the attachment of alanine to tRNA(Ala) in a two-step reaction: alanine is first activated by ATP to form Ala-AMP and then transferred to the acceptor end of tRNA(Ala). Also edits incorrectly charged Ser-tRNA(Ala) and Gly-tRNA(Ala) via its editing domain. This chain is Alanine--tRNA ligase, found in Corynebacterium glutamicum (strain R).